The chain runs to 340 residues: Uridine nucleosidase (340 aa).

H254 is an active-site residue.

It belongs to the IUNH family.

The protein resides in the cytoplasm. The protein localises to the nucleus. It carries out the reaction uridine + H2O = D-ribose + uracil. Its function is as follows. Also acts on cytidine. This chain is Uridine nucleosidase (URH1), found in Saccharomyces cerevisiae (strain ATCC 204508 / S288c) (Baker's yeast).